Here is a 398-residue protein sequence, read N- to C-terminus: Cytochrome b (398 aa).

Residues 45–65 (LGSIAGIALVIQIITGVILAM) traverse the membrane as a helical segment. Positions 95 and 109 each coordinate heme b. Helical transmembrane passes span 97–117 (VGAS…LYYG), 129–149 (IGII…VLPW), 164–184 (FSAI…GFSV), 192–212 (FFSL…LHLL), 245–265 (FVGF…EPNY), 304–324 (LAGV…PWLD), 335–355 (PIYR…GYLG), and 364–384 (IIIS…VLPL). The heme b site is built by His196 and His210.

Belongs to the cytochrome b family. The main subunits of complex b-c1 are: cytochrome b, cytochrome c1 and the Rieske protein. Requires heme b as cofactor.

The protein resides in the cell membrane. Functionally, component of the ubiquinol-cytochrome c reductase complex (complex III or cytochrome b-c1 complex), which is a respiratory chain that generates an electrochemical potential coupled to ATP synthesis. The chain is Cytochrome b (petB) from Rickettsia typhi (strain ATCC VR-144 / Wilmington).